The chain runs to 385 residues: tRNA (guanine(26)-N(2))-dimethyltransferase (385 aa).

The region spanning 1 to 379 (MNITEGVVEL…ATIAEIRSAT (379 aa)) is the Trm1 methyltransferase domain. Residues arginine 37, arginine 67, aspartate 82, aspartate 108, and alanine 109 each coordinate S-adenosyl-L-methionine. Zn(2+) contacts are provided by cysteine 247, cysteine 250, cysteine 267, and cysteine 270.

The protein belongs to the class I-like SAM-binding methyltransferase superfamily. Trm1 family.

The catalysed reaction is guanosine(26) in tRNA + 2 S-adenosyl-L-methionine = N(2)-dimethylguanosine(26) in tRNA + 2 S-adenosyl-L-homocysteine + 2 H(+). Dimethylates a single guanine residue at position 26 of a number of tRNAs using S-adenosyl-L-methionine as donor of the methyl groups. The chain is tRNA (guanine(26)-N(2))-dimethyltransferase from Haloquadratum walsbyi (strain DSM 16790 / HBSQ001).